Here is a 169-residue protein sequence, read N- to C-terminus: Ribosome maturation factor RimP (169 aa).

It belongs to the RimP family.

The protein localises to the cytoplasm. Its function is as follows. Required for maturation of 30S ribosomal subunits. The protein is Ribosome maturation factor RimP of Koribacter versatilis (strain Ellin345).